Reading from the N-terminus, the 353-residue chain is DNA polymerase IV (353 aa).

The UmuC domain occupies 14 to 198; it reads IIHIDMDAFF…MDISKFHGVG (185 aa). Mg(2+) contacts are provided by aspartate 18 and aspartate 116. Glutamate 117 is a catalytic residue.

This sequence belongs to the DNA polymerase type-Y family. In terms of assembly, monomer. Mg(2+) serves as cofactor.

It is found in the cytoplasm. The catalysed reaction is DNA(n) + a 2'-deoxyribonucleoside 5'-triphosphate = DNA(n+1) + diphosphate. Its function is as follows. Poorly processive, error-prone DNA polymerase involved in untargeted mutagenesis. Copies undamaged DNA at stalled replication forks, which arise in vivo from mismatched or misaligned primer ends. These misaligned primers can be extended by PolIV. Exhibits no 3'-5' exonuclease (proofreading) activity. May be involved in translesional synthesis, in conjunction with the beta clamp from PolIII. The sequence is that of DNA polymerase IV from Streptococcus pneumoniae serotype 4 (strain ATCC BAA-334 / TIGR4).